The sequence spans 261 residues: MTDPAHHDDRPTLVIKVGGNDLDDATFVAELARVVAAIRPLPVLVHGGGKEIGILQETLGSTPRFVGGLRYTDATALTAAEMVLCGSVSTRLVAALIAAGADALGISGVDRGLIRVVKQEHPAGDLGRVGRPTAVRGEVLRDLLDHGVIPVIAPIALGPDGPYNVNADEAAGAVAAALGVSEAVFVTNVPGVLVKGDVMRYLTRSEIERLIADGTISGGMIPKVRAALTALDAGVHAARITNLEGLLNQGTTIITEREPHE.

Residues G48 to G49, R70, and N164 each bind substrate.

The protein belongs to the acetylglutamate kinase family. ArgB subfamily.

It is found in the cytoplasm. The catalysed reaction is N-acetyl-L-glutamate + ATP = N-acetyl-L-glutamyl 5-phosphate + ADP. The protein operates within amino-acid biosynthesis; L-arginine biosynthesis; N(2)-acetyl-L-ornithine from L-glutamate: step 2/4. Functionally, catalyzes the ATP-dependent phosphorylation of N-acetyl-L-glutamate. The sequence is that of Acetylglutamate kinase from Roseiflexus sp. (strain RS-1).